A 95-amino-acid chain; its full sequence is Small ribosomal subunit protein bS6 (95 aa).

This sequence belongs to the bacterial ribosomal protein bS6 family.

In terms of biological role, binds together with bS18 to 16S ribosomal RNA. The chain is Small ribosomal subunit protein bS6 from Corynebacterium jeikeium (strain K411).